A 394-amino-acid polypeptide reads, in one-letter code: Mitogen-activated protein kinase 2 (394 aa).

The segment covering 1–31 (MRMEGGGGGGHGHHGGGGGGHGHHGGIGGGE) has biased composition (gly residues). The disordered stretch occupies residues 1–33 (MRMEGGGGGGHGHHGGGGGGHGHHGGIGGGEAQ). A Protein kinase domain is found at 61–347 (VPPIRPVGRG…VDEALCHPYL (287 aa)). ATP is bound by residues 67–75 (VGRGACGII) and Lys90. The active-site Proton acceptor is Asp187. Residue Tyr221 is modified to Phosphotyrosine.

Belongs to the protein kinase superfamily. CMGC Ser/Thr protein kinase family. MAP kinase subfamily. The phosphorylation on Tyr-221 activates the enzyme. A conserved Thr, which must also be phosphorylated to activate the enzyme in closely related sequences, is replaced by Met-219 in this sequence.

It catalyses the reaction L-seryl-[protein] + ATP = O-phospho-L-seryl-[protein] + ADP + H(+). The enzyme catalyses L-threonyl-[protein] + ATP = O-phospho-L-threonyl-[protein] + ADP + H(+). This is Mitogen-activated protein kinase 2 (MPK2) from Oryza sativa subsp. japonica (Rice).